We begin with the raw amino-acid sequence, 424 residues long: Adenylosuccinate synthetase (424 aa).

GTP contacts are provided by residues 11 to 17 (GDEGKGK) and 39 to 41 (GHT). The active-site Proton acceptor is aspartate 12. Residues aspartate 12 and glycine 39 each coordinate Mg(2+). IMP is bound by residues 12 to 15 (DEGK), 37 to 40 (NAGH), threonine 127, arginine 141, glutamine 223, threonine 238, and arginine 302. Histidine 40 functions as the Proton donor in the catalytic mechanism. A substrate-binding site is contributed by 298-304 (TTTGRGR). GTP is bound by residues arginine 304, 330–332 (KLD), and 412–414 (SVG).

This sequence belongs to the adenylosuccinate synthetase family. In terms of assembly, homodimer. Requires Mg(2+) as cofactor.

It is found in the cytoplasm. The enzyme catalyses IMP + L-aspartate + GTP = N(6)-(1,2-dicarboxyethyl)-AMP + GDP + phosphate + 2 H(+). It participates in purine metabolism; AMP biosynthesis via de novo pathway; AMP from IMP: step 1/2. Functionally, plays an important role in the de novo pathway of purine nucleotide biosynthesis. Catalyzes the first committed step in the biosynthesis of AMP from IMP. This is Adenylosuccinate synthetase from Methanosarcina barkeri (strain Fusaro / DSM 804).